The primary structure comprises 278 residues: Phosphatidylglycerol--prolipoprotein diacylglyceryl transferase (278 aa).

3 consecutive transmembrane segments (helical) span residues 21–41 (WYGIIIAAGILLGYFIAQASV), 54–74 (IIFWSAIFGFIVARIYFVIFQ), and 88–108 (IWHGGIAIHGGLIGGFVTGII). Arg-136 provides a ligand contact to a 1,2-diacyl-sn-glycero-3-phospho-(1'-sn-glycerol). The next 2 helical transmembrane spans lie at 176–196 (QPTFLYESLWDILGFVILILL) and 234–254 (IRVAQLMSIILILIGVIIMII).

Belongs to the Lgt family.

The protein resides in the cell membrane. The enzyme catalyses L-cysteinyl-[prolipoprotein] + a 1,2-diacyl-sn-glycero-3-phospho-(1'-sn-glycerol) = an S-1,2-diacyl-sn-glyceryl-L-cysteinyl-[prolipoprotein] + sn-glycerol 1-phosphate + H(+). The protein operates within protein modification; lipoprotein biosynthesis (diacylglyceryl transfer). Its function is as follows. Catalyzes the transfer of the diacylglyceryl group from phosphatidylglycerol to the sulfhydryl group of the N-terminal cysteine of a prolipoprotein, the first step in the formation of mature lipoproteins. In Staphylococcus xylosus, this protein is Phosphatidylglycerol--prolipoprotein diacylglyceryl transferase.